Consider the following 67-residue polypeptide: MAVPKRKMSRSNTRSRRSQWKAAEETLVTSTVRGQVAYSRPHTARVVTDSAGTPLYLEYKGRKVKDL.

Basic residues predominate over residues 1–19 (MAVPKRKMSRSNTRSRRSQ). Residues 1 to 22 (MAVPKRKMSRSNTRSRRSQWKA) are disordered.

The protein belongs to the bacterial ribosomal protein bL32 family.

In Kineococcus radiotolerans (strain ATCC BAA-149 / DSM 14245 / SRS30216), this protein is Large ribosomal subunit protein bL32.